The primary structure comprises 87 residues: Apoptosis inducing factor BLCAP B (87 aa).

The next 2 helical transmembrane spans lie at 19–39 (PALWFSHSVFMGFYLLSFLLE) and 43–63 (CTICALVFLGALFLICYSCWG).

It belongs to the BLCAP family.

The protein localises to the cytoplasm. It localises to the nucleus. It is found in the membrane. In terms of biological role, acts as a tumor suppressor; induces growth arrest at G(1)/S checkpoint and apoptosis via RB1-dependent and p53/TP53- and NF-kappa-B-independent mechanisms. Modulates expression of genes involved in the regulation of proliferation, cell cycle and apoptosis. The sequence is that of Apoptosis inducing factor BLCAP B (blcap-b) from Xenopus laevis (African clawed frog).